The sequence spans 280 residues: Putative pyruvate, phosphate dikinase regulatory protein 1 (280 aa).

152–159 (GVSRTSKT) serves as a coordination point for ADP.

The protein belongs to the pyruvate, phosphate/water dikinase regulatory protein family. PDRP subfamily.

It catalyses the reaction N(tele)-phospho-L-histidyl/L-threonyl-[pyruvate, phosphate dikinase] + ADP = N(tele)-phospho-L-histidyl/O-phospho-L-threonyl-[pyruvate, phosphate dikinase] + AMP + H(+). The enzyme catalyses N(tele)-phospho-L-histidyl/O-phospho-L-threonyl-[pyruvate, phosphate dikinase] + phosphate + H(+) = N(tele)-phospho-L-histidyl/L-threonyl-[pyruvate, phosphate dikinase] + diphosphate. Its function is as follows. Bifunctional serine/threonine kinase and phosphorylase involved in the regulation of the pyruvate, phosphate dikinase (PPDK) by catalyzing its phosphorylation/dephosphorylation. The sequence is that of Putative pyruvate, phosphate dikinase regulatory protein 1 from Latilactobacillus sakei subsp. sakei (strain 23K) (Lactobacillus sakei subsp. sakei).